The following is a 443-amino-acid chain: UDP-N-acetylmuramate--L-alanine ligase (443 aa).

An ATP-binding site is contributed by 110-116 (GAHGKTS).

Belongs to the MurCDEF family.

It is found in the cytoplasm. It carries out the reaction UDP-N-acetyl-alpha-D-muramate + L-alanine + ATP = UDP-N-acetyl-alpha-D-muramoyl-L-alanine + ADP + phosphate + H(+). It functions in the pathway cell wall biogenesis; peptidoglycan biosynthesis. Its function is as follows. Cell wall formation. In Lactococcus lactis subsp. lactis (strain IL1403) (Streptococcus lactis), this protein is UDP-N-acetylmuramate--L-alanine ligase.